The primary structure comprises 310 residues: Ribosomal RNA small subunit methyltransferase H (310 aa).

Residues 33–35 (GGH), aspartate 52, phenylalanine 79, aspartate 98, and glutamine 105 contribute to the S-adenosyl-L-methionine site.

Belongs to the methyltransferase superfamily. RsmH family.

The protein localises to the cytoplasm. It carries out the reaction cytidine(1402) in 16S rRNA + S-adenosyl-L-methionine = N(4)-methylcytidine(1402) in 16S rRNA + S-adenosyl-L-homocysteine + H(+). Functionally, specifically methylates the N4 position of cytidine in position 1402 (C1402) of 16S rRNA. The polypeptide is Ribosomal RNA small subunit methyltransferase H (Campylobacter jejuni (strain RM1221)).